The primary structure comprises 318 residues: Nodulation protein D (318 aa).

One can recognise an HTH lysR-type domain in the interval L6–T63. Residues L23–G42 constitute a DNA-binding region (H-T-H motif).

This sequence belongs to the LysR transcriptional regulatory family.

Functionally, nodD regulates the expression of the nodABCFE genes which encode other nodulation proteins. NodD is also a negative regulator of its own expression. Binds flavonoids as inducers. The chain is Nodulation protein D (nodD) from Rhizobium leguminosarum bv. trifolii.